Consider the following 206-residue polypeptide: Small ribosomal subunit protein uS4 (206 aa).

In terms of domain architecture, S4 RNA-binding spans 96-156; the sequence is GRLDNVVYRM…EKAKNQLRVK (61 aa).

Belongs to the universal ribosomal protein uS4 family. Part of the 30S ribosomal subunit. Contacts protein S5. The interaction surface between S4 and S5 is involved in control of translational fidelity.

Functionally, one of the primary rRNA binding proteins, it binds directly to 16S rRNA where it nucleates assembly of the body of the 30S subunit. Its function is as follows. With S5 and S12 plays an important role in translational accuracy. The protein is Small ribosomal subunit protein uS4 of Marinobacter nauticus (strain ATCC 700491 / DSM 11845 / VT8) (Marinobacter aquaeolei).